The following is a 317-amino-acid chain: D-alanine--D-alanine ligase (317 aa).

One can recognise an ATP-grasp domain in the interval 103 to 299 (KHIFRSLNID…FNELVKIIIE (197 aa)). 130–183 (KIDYPYVLKPINEGSSIGVYIIFSHEDYLELKDNSSTIMEKMIVEEYIPGIELH) provides a ligand contact to ATP. Mg(2+) contacts are provided by Asp251, Glu265, and Asn267.

Belongs to the D-alanine--D-alanine ligase family. Mg(2+) is required as a cofactor. Requires Mn(2+) as cofactor.

The protein localises to the cytoplasm. It carries out the reaction 2 D-alanine + ATP = D-alanyl-D-alanine + ADP + phosphate + H(+). It participates in cell wall biogenesis; peptidoglycan biosynthesis. Its function is as follows. Cell wall formation. This Wolbachia sp. subsp. Drosophila simulans (strain wRi) protein is D-alanine--D-alanine ligase.